Consider the following 907-residue polypeptide: Phototropin-2 (907 aa).

The segment at 28 to 84 (ATAGLEIVAEDAPSGSSGAHQQQAWRPVAPATAGRDSGGTGSGKSSVDGGVGRASHD) is disordered. Polar residues predominate over residues 41-51 (SGSSGAHQQQA). The region spanning 89-162 (VSQELKDALS…AKIRDAVKHG (74 aa)) is the PAS 1 domain. Residues 138–143 (NCRFLQ), Arg156, Asn171, Asn181, and Gln202 contribute to the FMN site. Position 139 is an S-4a-FMN cysteine (Cys139). One can recognise a PAC 1 domain in the interval 163–217 (RSFCGRLLNYRKDGAPFWNLLTVTPIRDDNGKVIKFIGMQVEVSKYTEGLSDKRM). Residues 332-363 (RSSVGSREAPAVVEEPAPAPPPAPEVVERTDS) are disordered. Positions 375–448 (QGIDLATTLE…DKIREAIREQ (74 aa)) constitute a PAS 2 domain. FMN-binding positions include 424 to 429 (NCRFLQ), Arg442, Asn457, Asn467, and Gln488. Cys425 is subject to S-4a-FMN cysteine. The region spanning 449-503 (KEITVQLINYTKSGKKFWNLFHLQPMRDQKGELQYFIGVQLDGSDHVEPLRNRLS) is the PAC 2 domain. The 288-residue stretch at 576–863 (FKPVKPLGCG…ANDIKQHSFF (288 aa)) folds into the Protein kinase domain. ATP-binding positions include 582–590 (LGCGDTGSV) and Lys605. Catalysis depends on Asp701, which acts as the Proton acceptor.

It belongs to the protein kinase superfamily. Ser/Thr protein kinase family. In terms of assembly, homodimer. FMN is required as a cofactor. Autophosphorylated in response to blue light irradiation. In terms of processing, 2 molecules of FMN bind covalently to cysteines after exposure to blue light and are reversed in the dark. As to expression, expressed at low levels in leaves of dark-grown seedlings.

It catalyses the reaction L-seryl-[protein] + ATP = O-phospho-L-seryl-[protein] + ADP + H(+). The enzyme catalyses L-threonyl-[protein] + ATP = O-phospho-L-threonyl-[protein] + ADP + H(+). Protein kinase that acts as a blue light photoreceptor in a signal-transduction pathway for phototropic responses. Regulates a wide range of physiological activities in plants that maximize the efficiency of photosynthesis, such as chloroplast relocations, stomata opening, and leaf expansion. This chain is Phototropin-2 (PHOT2), found in Oryza sativa subsp. japonica (Rice).